The chain runs to 1439 residues: DNA-directed RNA polymerase subunit beta' (1439 aa).

The Zn(2+) site is built by cysteine 70, cysteine 72, cysteine 85, and cysteine 88. Residues aspartate 504, aspartate 506, and aspartate 508 each coordinate Mg(2+). Cysteine 862, cysteine 936, cysteine 943, and cysteine 946 together coordinate Zn(2+).

Belongs to the RNA polymerase beta' chain family. As to quaternary structure, the RNAP catalytic core consists of 2 alpha, 1 beta, 1 beta' and 1 omega subunit. When a sigma factor is associated with the core the holoenzyme is formed, which can initiate transcription. The cofactor is Mg(2+). It depends on Zn(2+) as a cofactor.

The enzyme catalyses RNA(n) + a ribonucleoside 5'-triphosphate = RNA(n+1) + diphosphate. In terms of biological role, DNA-dependent RNA polymerase catalyzes the transcription of DNA into RNA using the four ribonucleoside triphosphates as substrates. The chain is DNA-directed RNA polymerase subunit beta' from Gluconobacter oxydans (strain 621H) (Gluconobacter suboxydans).